A 436-amino-acid chain; its full sequence is 3-ketoacyl-CoA thiolase (436 aa).

Catalysis depends on C99, which acts as the Acyl-thioester intermediate. Residues H392 and C422 each act as proton acceptor in the active site.

This sequence belongs to the thiolase-like superfamily. Thiolase family. As to quaternary structure, heterotetramer of two alpha chains (FadJ) and two beta chains (FadI).

The protein resides in the cytoplasm. It carries out the reaction an acyl-CoA + acetyl-CoA = a 3-oxoacyl-CoA + CoA. It functions in the pathway lipid metabolism; fatty acid beta-oxidation. Functionally, catalyzes the final step of fatty acid oxidation in which acetyl-CoA is released and the CoA ester of a fatty acid two carbons shorter is formed. The polypeptide is 3-ketoacyl-CoA thiolase (Escherichia coli O127:H6 (strain E2348/69 / EPEC)).